Reading from the N-terminus, the 610-residue chain is Autophagy-related protein 22-1 (610 aa).

Pro residues predominate over residues 1–11 (MAFTPSSPPSP). Residues 1-29 (MAFTPSSPPSPAADASQRPSRYPGEDTTP) are disordered. The chain crosses the membrane as a helical span at residues 35-55 (ILGWYAYGIAAEVFAVCGVGS). N90 carries N-linked (GlcNAc...) asparagine glycosylation. The next 3 membrane-spanning stretches (helical) occupy residues 120-140 (SFAMYTFSLAVLVQALTLISF), 152-171 (TLLLAFGFIGSATSMLFVFV), and 189-209 (CLGSSFVVLNSFLPVLVANDP). The segment at 229–265 (GQFEPRDSFSERNPEFESQYTPGIGLGSKPSTNATSP) is disordered. The span at 232 to 243 (EPRDSFSERNPE) shows a compositional bias: basic and acidic residues. A glycan (N-linked (GlcNAc...) asparagine) is linked at N261. A run of 8 helical transmembrane segments spans residues 278 to 298 (VGLGYCAAVLVQILSIGLLFA), 310 to 330 (TLPLRFVLLLVGIWWFSFTMV), 384 to 404 (VFLVAWFLLSDAIATVSGTAI), 418 to 438 (VGCLSITATLSGMTGAFLWPV), 453 to 473 (LCIALFEIIPLYGMLAYIPLF), 488 to 510 (FPLAIVHGIVSGGLSSYCRSFFG), 522 to 544 (YALYAATDKGSSVIGPAIVGMLI), and 553 to 573 (GFFFIAILIVLPIPLVWMVNA). The disordered stretch occupies residues 588-610 (AKGQESETGEPGEEAEGLLARGA). The span at 594 to 603 (ETGEPGEEAE) shows a compositional bias: acidic residues.

Belongs to the ATG22 family.

Its subcellular location is the vacuole membrane. Functionally, vacuolar effluxer which mediate the efflux of amino acids resulting from autophagic degradation. The release of autophagic amino acids allows the maintenance of protein synthesis and viability during nitrogen starvation. In Aspergillus terreus (strain NIH 2624 / FGSC A1156), this protein is Autophagy-related protein 22-1 (atg22-1).